Consider the following 390-residue polypeptide: GTPase Obg (390 aa).

In terms of domain architecture, Obg spans 1 to 159 (MKFVDEATIK…RELRLELLLL (159 aa)). In terms of domain architecture, OBG-type G spans 160–333 (ADVGMLGLPN…LCDELADFMD (174 aa)). Residues 166–173 (GLPNAGKS), 191–195 (FTTLI), 213–216 (DIPG), 283–286 (NKTD), and 314–316 (AAV) contribute to the GTP site. Mg(2+)-binding residues include Ser173 and Thr193.

Belongs to the TRAFAC class OBG-HflX-like GTPase superfamily. OBG GTPase family. Monomer. It depends on Mg(2+) as a cofactor.

It is found in the cytoplasm. Functionally, an essential GTPase which binds GTP, GDP and possibly (p)ppGpp with moderate affinity, with high nucleotide exchange rates and a fairly low GTP hydrolysis rate. Plays a role in control of the cell cycle, stress response, ribosome biogenesis and in those bacteria that undergo differentiation, in morphogenesis control. The polypeptide is GTPase Obg (Aliivibrio fischeri (strain MJ11) (Vibrio fischeri)).